Here is a 477-residue protein sequence, read N- to C-terminus: PTS system glucose-specific EIICB component (477 aa).

The PTS EIIC type-1 domain maps to 1-388; that stretch reads MFKNVFANLQ…FNLDTPGREN (388 aa). Transmembrane regions (helical) follow at residues 15–35, 51–71, 76–96, 112–132, 152–172, 191–211, 250–270, 280–300, 304–324, and 357–377; these read SLML…IGSA, TGGS…ALGF, GVAA…LTAV, HLSD…AYMF, FVPI…SLIW, PILA…FGLH, LSGG…AIWH, IGSI…TEPI, FIIV…LSFP, and FPII…LFII. One can recognise a PTS EIIB type-1 domain in the interval 399-477; sequence NEIAPYIITA…TAMDECIKNI (79 aa). Cys-421 functions as the Phosphocysteine intermediate; for EIIB activity in the catalytic mechanism. Position 421 is a phosphocysteine (Cys-421).

Its subcellular location is the cell inner membrane. It catalyses the reaction N(pros)-phospho-L-histidyl-[protein] + D-glucose(out) = D-glucose 6-phosphate(in) + L-histidyl-[protein]. Functionally, the phosphoenolpyruvate-dependent sugar phosphotransferase system (sugar PTS), a major carbohydrate active transport system, catalyzes the phosphorylation of incoming sugar substrates concomitantly with their translocation across the cell membrane. The enzyme II complex composed of PtsG and Crr is involved in glucose transport. This chain is PTS system glucose-specific EIICB component (ptsG), found in Buchnera aphidicola subsp. Acyrthosiphon pisum (strain APS) (Acyrthosiphon pisum symbiotic bacterium).